A 386-amino-acid polypeptide reads, in one-letter code: Agamous-like MADS-box protein AGL103 (386 aa).

The 48-residue stretch at 29–76 (SSSRATSLIKRQQTVFKKAKELSILCDIDVCVICYGSNGELKTWPEER) folds into the MADS-box domain.

Interacts with MEE14/CBP1.

It is found in the nucleus. Its function is as follows. Probable transcription factor that may function in the maintenance of the proper function of the central cell in pollen tube attraction. The polypeptide is Agamous-like MADS-box protein AGL103 (Arabidopsis thaliana (Mouse-ear cress)).